A 604-amino-acid polypeptide reads, in one-letter code: Numb-like protein (604 aa).

4 disordered regions span residues 1–68 (MSRS…QWQA), 223–283 (GSFR…PVAA), 372–457 (ASAG…TLQP), and 531–604 (KAGA…EIEL). The PID domain maps to 74–225 (RKGTCSFPVR…RTSFAREGSF (152 aa)). Residues Ser224 and Ser228 each carry the phosphoserine modification. The span at 233–245 (PAEREAGDKKKAE) shows a compositional bias: basic and acidic residues. Over residues 246–260 (AAAAPAVAPGPAQPG) the composition is skewed to low complexity. Ser263 carries the phosphoserine modification. Position 279 is a phosphothreonine (Thr279). Residues 409 to 418 (TPSEAERWLE) show a composition bias toward basic and acidic residues. Position 411 is a phosphoserine (Ser411). 2 stretches are compositionally biased toward low complexity: residues 427–441 (QQQQQQQQQQQQQQQ) and 542–552 (SAPGGQARPRP). Residues 553-568 (NGAPWPPEPAPAPAPE) are compositionally biased toward pro residues.

Interacts (via PTB domain) with MAP3K7IP2 (via C-terminal). Interacts (via C-terminal) with TRAF6 (via TRAF domains). Associates with EPS15 and NOTCH1. As to expression, preferentially expressed in the nervous system. In the developing neocortex, expressed in postmitotic neurons in the cortical plate but not in progenitors within the ventricular zone.

The protein resides in the cytoplasm. Plays a role in the process of neurogenesis. Required throughout embryonic neurogenesis to maintain neural progenitor cells, also called radial glial cells (RGCs), by allowing their daughter cells to choose progenitor over neuronal cell fate. Not required for the proliferation of neural progenitor cells before the onset of embryonic neurogenesis. Also required postnatally in the subventricular zone (SVZ) neurogenesis by regulating SVZ neuroblasts survival and ependymal wall integrity. Negative regulator of NF-kappa-B signaling pathway. The inhibition of NF-kappa-B activation is mediated at least in part, by preventing MAP3K7IP2 to interact with polyubiquitin chains of TRAF6 and RIPK1 and by stimulating the 'Lys-48'-linked polyubiquitination and degradation of TRAF6 in cortical neurons. This chain is Numb-like protein (Numbl), found in Mus musculus (Mouse).